We begin with the raw amino-acid sequence, 460 residues long: UDP-N-acetylmuramoylalanine--D-glutamate ligase (460 aa).

Residue 115–121 participates in ATP binding; sequence GTNGKTT.

Belongs to the MurCDEF family.

It localises to the cytoplasm. It carries out the reaction UDP-N-acetyl-alpha-D-muramoyl-L-alanine + D-glutamate + ATP = UDP-N-acetyl-alpha-D-muramoyl-L-alanyl-D-glutamate + ADP + phosphate + H(+). Its pathway is cell wall biogenesis; peptidoglycan biosynthesis. Cell wall formation. Catalyzes the addition of glutamate to the nucleotide precursor UDP-N-acetylmuramoyl-L-alanine (UMA). This chain is UDP-N-acetylmuramoylalanine--D-glutamate ligase, found in Salinibacter ruber (strain DSM 13855 / M31).